The chain runs to 65 residues: Large ribosomal subunit protein uL29c (65 aa).

It belongs to the universal ribosomal protein uL29 family.

The protein localises to the plastid. It localises to the chloroplast. This Guillardia theta (Cryptophyte) protein is Large ribosomal subunit protein uL29c (rpl29).